Reading from the N-terminus, the 273-residue chain is uncharacterized protein (273 aa).

This is an uncharacterized protein from Acanthamoeba polyphaga mimivirus (APMV).